The primary structure comprises 3661 residues: Serine/threonine-protein kinase SMG1 (3661 aa).

Over residues 1–11 (MSRRAPGSRLS) the composition is skewed to low complexity. Disordered stretches follow at residues 1–101 (MSRR…TYGR) and 116–144 (PEFTSVQHGSRALATKDMRKSQERSMSYS). The tract at residues 1 to 1977 (MSRRAPGSRL…GVLLQQHMYV (1977 aa)) is interaction with SMG8 and SMG9. Polar residues predominate over residues 26–35 (NDWQPRTDSA). Basic and acidic residues-rich tracts occupy residues 69-86 (QRHDDTRVHADIQNDEKG) and 129-138 (ATKDMRKSQE). Lysine 173 is subject to N6-acetyllysine. Over residues 1154–1165 (RNSASPKHSLNG) the composition is skewed to polar residues. The segment at 1154 to 1175 (RNSASPKHSLNGESRKTVLSKP) is disordered. Residues 1283-1866 (RELQKSIEVQ…LYPAIVGTIS (584 aa)) enclose the FAT domain. The stretch at 1817–1852 (APWRGIIPQLFSRLNHPEVYVRQSICNLLCRVAQDS) is one HEAT repeat. The tract at residues 1898 to 1919 (ECEGGSPPASQDSNKDEPKSGL) is disordered. The PI3K/PI4K catalytic domain maps to 2124–2463 (VGGTITILPT…MEREITRSLF (340 aa)). The interval 2130–2136 (ILPTKTK) is G-loop. Positions 2332 to 2340 (GLGDRHLDN) are catalytic loop. Residues 2352 to 2376 (HIDYNVCFEKGKSLRVPEKVPFRMT) form an activation loop region. Residue threonine 3550 is modified to Phosphothreonine. Phosphoserine occurs at positions 3556 and 3570. Residues 3568-3579 (ATSADTPPSTVP) show a composition bias toward polar residues. The tract at residues 3568–3591 (ATSADTPPSTVPGTGKSVACSPKK) is disordered. 2 positions are modified to phosphothreonine: threonine 3573 and threonine 3577. Positions 3629–3661 (RRMSVAEQVDYVIKEATNLDNLAQLYEGWTAWV) constitute an FATC domain.

It belongs to the PI3/PI4-kinase family. In terms of assembly, component of the SMG1C complex composed of SMG1, SMG8 and SMG9; the recruitment of SMG8 to SMG1 N-terminus induces a large conformational change in the SMG1 C-terminal head domain containing the catalytic domain. Component of the transient SURF (SMG1-UPF1-eRF1-eRF3) complex. Part of a complex composed of SMG1, DHX34 and UPF1; within the complex DHX34 acts as a scaffolding protein to facilitate SMG1 phosphorylation of UPF1. Interacts with PRKCI. Interacts with TELO2 and TTI1. Interacts with RUVBL1 and RUVBL2. Interacts with UPF2. Interacts with DHX34 (via C-terminus); the interaction is RNA-independent. It depends on Mn(2+) as a cofactor. In terms of processing, autophosphorylated. As to expression, widely expressed, with highest level in heart and skeletal muscle. Expressed in placenta, brain, lung and spleen, but not in liver.

The protein localises to the nucleus. Its subcellular location is the cytoplasm. The enzyme catalyses L-seryl-[protein] + ATP = O-phospho-L-seryl-[protein] + ADP + H(+). It carries out the reaction L-threonyl-[protein] + ATP = O-phospho-L-threonyl-[protein] + ADP + H(+). Its activity is regulated as follows. Inhibited by caffeine, LY294002 and wortmannin. In terms of biological role, serine/threonine protein kinase involved in both mRNA surveillance and genotoxic stress response pathways. Recognizes the substrate consensus sequence [ST]-Q. Plays a central role in nonsense-mediated decay (NMD) of mRNAs containing premature stop codons by phosphorylating UPF1/RENT1. Recruited by release factors to stalled ribosomes together with SMG8 and SMG9 (forming the SMG1C protein kinase complex), and UPF1 to form the transient SURF (SMG1-UPF1-eRF1-eRF3) complex. In EJC-dependent NMD, the SURF complex associates with the exon junction complex (EJC) through UPF2 and allows the formation of an UPF1-UPF2-UPF3 surveillance complex which is believed to activate NMD. Also acts as a genotoxic stress-activated protein kinase that displays some functional overlap with ATM. Can phosphorylate p53/TP53 and is required for optimal p53/TP53 activation after cellular exposure to genotoxic stress. Its depletion leads to spontaneous DNA damage and increased sensitivity to ionizing radiation (IR). May activate PRKCI but not PRKCZ. The sequence is that of Serine/threonine-protein kinase SMG1 from Homo sapiens (Human).